The following is a 139-amino-acid chain: Ribonuclease P protein component (139 aa).

The segment at 120–139 (KATTGGECTPKSEKCVTAPR) is disordered.

This sequence belongs to the RnpA family. In terms of assembly, consists of a catalytic RNA component (M1 or rnpB) and a protein subunit.

It carries out the reaction Endonucleolytic cleavage of RNA, removing 5'-extranucleotides from tRNA precursor.. RNaseP catalyzes the removal of the 5'-leader sequence from pre-tRNA to produce the mature 5'-terminus. It can also cleave other RNA substrates such as 4.5S RNA. The protein component plays an auxiliary but essential role in vivo by binding to the 5'-leader sequence and broadening the substrate specificity of the ribozyme. The protein is Ribonuclease P protein component of Chlamydia pneumoniae (Chlamydophila pneumoniae).